The chain runs to 1060 residues: Anoctamin-8 (1060 aa).

The segment at 1–32 is disordered; that stretch reads MAEAASGAGDVTLEGERGKRPPPEGEPAAPAS. The residue at position 2 (A2) is an N-acetylalanine. The Cytoplasmic portion of the chain corresponds to 2–244; that stretch reads AEAASGAGDV…DDICDYFGVK (243 aa). Residues 14–23 show a composition bias toward basic and acidic residues; the sequence is EGERGKRPPP. A helical transmembrane segment spans residues 245–265; sequence IAMYFAWLGFYTSAMVYPAVF. Residues 266–281 lie on the Extracellular side of the membrane; sequence GSVLYTFTEADQTSRD. A helical membrane pass occupies residues 282–302; sequence VSCVVFALFNVIWSTLFLEEW. Over 303-356 the chain is Cytoplasmic; that stretch reads KRRGAELAYKWGTLDSPGEAVEEPRPQFRGIRRISPITRAEEFYYPPWKRLLFQ. The residue at position 318 (S318) is a Phosphoserine. The helical transmembrane segment at 357–377 threads the bilayer; that stretch reads LLVSLPLCLACLICVFILMLG. Over 378–400 the chain is Extracellular; sequence CFQLQELVLSVKGLPRLVRFLPK. The chain crosses the membrane as a helical span at residues 401 to 421; that stretch reads VMLALLVSVSAEGYKKLAVWL. The Cytoplasmic segment spans residues 422–437; it reads NDMENYRLESTYERHL. The helical transmembrane segment at 438-458 threads the bilayer; that stretch reads IIKVVLFQFVNSYLSLFYIGF. The Extracellular segment spans residues 459-745; sequence YLKDMDRLKE…YEDTFQDYQE (287 aa). Disordered stretches follow at residues 529–605, 619–640, 653–672, and 680–723; these read AQAD…SLLD, GAGR…SPTM, AEED…EPQT, and GEGR…HSPQ. The span at 534 to 547 shows a compositional bias: gly residues; sequence GGAGSRRCLGGGCG. 2 stretches are compositionally biased toward acidic residues: residues 549–559 and 581–602; these read PEEENEEEEEA and EEDE…EEGS. S665 carries the post-translational modification Phosphoserine. Positions 680–694 are enriched in basic and acidic residues; sequence GEGRDQGPDGDRDTE. An N-linked (GlcNAc...) asparagine glycan is attached at N708. Residues 746-766 traverse the membrane as a helical segment; that stretch reads MFVQFGYVVLFSSAFPLAALC. Topologically, residues 767–802 are cytoplasmic; that stretch reads ALVNNLIEIRSDAFKLCTGLQRPFGRRVESIGQWQK. S796 is modified (phosphoserine). The chain crosses the membrane as a helical span at residues 803-823; it reads VMEAMGVLAIVVNCYLIGQCG. Over 824 to 836 the chain is Extracellular; sequence QLQRLFPWLSPEA. Residues 837–857 form a helical membrane-spanning segment; the sequence is AIVSVVVLEHLALLVKYLIHV. The Cytoplasmic portion of the chain corresponds to 858-1060; that stretch reads AIPDIPGWVA…PRPEDAGHRP (203 aa). The interval 884–1060 is disordered; it reads HERQAQQRFQ…PRPEDAGHRP (177 aa). 2 stretches are compositionally biased toward basic and acidic residues: residues 899 to 927 and 935 to 950; these read RREE…EARA and VAER…ERPR. The span at 972–986 shows a compositional bias: pro residues; the sequence is TRPPAPTGCAPPPRS. At R991 the chain carries Asymmetric dimethylarginine; alternate. R991 carries the post-translational modification Omega-N-methylarginine; alternate. At R999 the chain carries Omega-N-methylarginine. Positions 1049 to 1060 are enriched in basic and acidic residues; that stretch reads PEPRPEDAGHRP.

It belongs to the anoctamin family. Predominant expression seen in epithelial tissues.

The protein localises to the cell membrane. In terms of biological role, does not exhibit calcium-activated chloride channel (CaCC) activity. This Mus musculus (Mouse) protein is Anoctamin-8 (Ano8).